Here is a 684-residue protein sequence, read N- to C-terminus: Fermitin family homolog 2 (684 aa).

Positions H40 to K81 are interaction with membranes containing phosphatidylinositol phosphate. A disordered region spans residues L141–E163. One can recognise an FERM domain in the interval D279–F577. A PH domain is found at K378–K474. K381 is an a 1,2-diacyl-sn-glycero-3-phospho-(1D-myo-inositol-3,4,5-trisphosphate) binding site.

This sequence belongs to the kindlin family.

The protein localises to the cytoplasm. It localises to the cell cortex. Its subcellular location is the cytoskeleton. It is found in the stress fiber. The protein resides in the cell junction. The protein localises to the focal adhesion. It localises to the membrane. Its subcellular location is the cell projection. It is found in the lamellipodium membrane. The protein resides in the nucleus. The protein localises to the myofibril. It localises to the sarcomere. Its subcellular location is the i band. It is found in the cell surface. Its function is as follows. Scaffolding protein that enhances integrin activation mediated by TLN1 and/or TLN2, but activates integrins only weakly by itself. Binds to membranes enriched in phosphoinositides. Enhances integrin-mediated cell adhesion onto the extracellular matrix and cell spreading; this requires both its ability to interact with integrins and with phospholipid membranes. Required for the assembly of focal adhesions. Participates in the connection between extracellular matrix adhesion sites and the actin cytoskeleton and also in the orchestration of actin assembly and cell shape modulation. Plays a role in the TGFB1 and integrin signaling pathways. Stabilizes active CTNNB1 and plays a role in the regulation of transcription mediated by CTNNB1 and TCF7L2/TCF4 and in Wnt signaling. Required for normal embryonic development, including normal heart morphogenesis and normal angiogenesis. The polypeptide is Fermitin family homolog 2 (fermt2) (Danio rerio (Zebrafish)).